Here is a 757-residue protein sequence, read N- to C-terminus: Relaxin receptor 1 (757 aa).

The Extracellular portion of the chain corresponds to 1-409 (MTSGSVFFYI…ENLLASIIQR (409 aa)). The LDL-receptor class A domain occupies 26 to 63 (KCSLGYFPCGNITKCLPQLLHCNGVDDCGNQADEDNCG). Intrachain disulfides connect Cys-27–Cys-40, Cys-34–Cys-53, and Cys-47–Cys-62. Asn-36 carries N-linked (GlcNAc...) asparagine glycosylation. Residues Leu-45, Asn-48, Val-50, Asp-52, Asp-58, and Glu-59 each coordinate Ca(2+). Residues 91 to 127 (ETPECLVGSVPVQCLCQGLELDCDETNLRAVPSVSSN) form the LRRNT domain. Asn-127 carries an N-linked (GlcNAc...) asparagine glycan. 9 LRR repeats span residues 151–172 (DLQK…AFRG), 175–196 (SLTK…VFED), 199–220 (RLEW…TFYG), 223–244 (SLIL…PLCQ), 248–269 (RLHW…TFIS), 272–293 (NLTV…TFAP), 296–317 (KLDE…IFKD), 320–341 (ELSQ…QFDY), and 344–365 (KLKS…MFRP). N-linked (GlcNAc...) asparagine glycosylation is found at Asn-264 and Asn-272. The N-linked (GlcNAc...) asparagine glycan is linked to Asn-325. The N-linked (GlcNAc...) asparagine glycan is linked to Asn-368. The helical transmembrane segment at 410–430 (VFVWVVSAVTCFGNIFVICMR) threads the bilayer. Over 431 to 443 (PYIRSENKLYAMS) the chain is Cytoplasmic. A helical transmembrane segment spans residues 444-464 (IISLCCADCLMGIYLFVIGGF). Residues 465-486 (DLKFRGEYNKHAQLWMESTHCQ) lie on the Extracellular side of the membrane. Cys-485 and Cys-563 are oxidised to a cystine. The helical transmembrane segment at 487 to 507 (LVGSLAILSTEVSVLLLTFLT) threads the bilayer. The Cytoplasmic segment spans residues 508–527 (LEKYICIVYPFRCVRPGKCR). Residues 528–548 (TITVLILIWITGFIVAFIPLS) traverse the membrane as a helical segment. Residues 549-577 (NKEFFKNYYGTNGVCFPLHSEDTESIGAQ) lie on the Extracellular side of the membrane. The helical transmembrane segment at 578–598 (IYSVAIFLGINLAAFIIIVFS) threads the bilayer. Over 599 to 629 (YGSMFYSVHQSAITATEIRNQVKKEMILAKR) the chain is Cytoplasmic. A helical transmembrane segment spans residues 630-650 (FFFIVFTDALCWIPIFVVKFL). Position 651 (Ser-651) is a topological domain, extracellular. Residues 652–672 (LLQVEIPGTITSWVVIFILPI) traverse the membrane as a helical segment. Over 673 to 757 (NSALNPILYT…SQSTRLNSYS (85 aa)) the chain is Cytoplasmic.

It belongs to the G-protein coupled receptor 1 family. As to quaternary structure, interacts with C1QTNF8. In terms of tissue distribution, expressed in the brain, kidney, testis, placenta, uterus, ovary, adrenal, prostate, skin and heart. Not detected in spleen.

The protein localises to the cell membrane. Its function is as follows. Receptor for relaxins. The activity of this receptor is mediated by G proteins leading to stimulation of adenylate cyclase and an increase of cAMP. Binding of the ligand may also activate a tyrosine kinase pathway that inhibits the activity of a phosphodiesterase that degrades cAMP. The polypeptide is Relaxin receptor 1 (RXFP1) (Homo sapiens (Human)).